The sequence spans 153 residues: Type II secretion system core protein G (153 aa).

Residues 1–7 (MERRQRG) constitute a propeptide, leader sequence. F8 is modified (N-methylphenylalanine). A helical membrane pass occupies residues 8–28 (FTLLEIMVVIVILGVLASLVV). 2 disordered regions span residues 68–91 (EQGL…PQDG) and 126–153 (MPDT…NGNP). Positions 134–143 (GNWNVGNGAH) are enriched in low complexity. Over residues 144 to 153 (NNGGNGNGNP) the composition is skewed to gly residues.

Belongs to the GSP G family. Type II secretion system is composed of four main components: the outer membrane complex, the inner membrane complex, the cytoplasmic secretion ATPase and the periplasm-spanning pseudopilus. Forms homomultimers. Cleaved by the prepilin peptidase. In terms of processing, methylated by prepilin peptidase at the amino group of the N-terminal phenylalanine once the leader sequence is cleaved.

It is found in the cell inner membrane. In terms of biological role, core component of the type II secretion system required for the energy-dependent secretion of extracellular factors such as proteases and toxins from the periplasm. Pseudopilin (pilin-like) protein that polymerizes to form the pseudopilus. Further polymerization triggers pseudopilus growth. This Dickeya chrysanthemi (Pectobacterium chrysanthemi) protein is Type II secretion system core protein G (outG).